The following is a 297-amino-acid chain: Transmembrane protein 169 (297 aa).

Residues Met1 to Gly88 are disordered. The Extracellular portion of the chain corresponds to Met1 to His159. Residues Arg22–Leu31 show a composition bias toward low complexity. Composition is skewed to acidic residues over residues Lys61 to Glu70 and Glu78 to Gly88. A helical transmembrane segment spans residues Val160–Phe180. Over Tyr181–Leu210 the chain is Cytoplasmic. The chain crosses the membrane as a helical span at residues Ile211 to Val231. Residues Ala232–Val297 lie on the Extracellular side of the membrane.

Its subcellular location is the membrane. The sequence is that of Transmembrane protein 169 (Tmem169) from Mus musculus (Mouse).